We begin with the raw amino-acid sequence, 258 residues long: Shikimate dehydrogenase (NADP(+)) (258 aa).

Shikimate is bound by residues 14–16 (SES) and Thr61. The active-site Proton acceptor is the Lys65. Shikimate contacts are provided by Asn86 and Asp101. NADP(+) is bound by residues 125 to 129 (GSGGS) and Leu211. Tyr213 is a binding site for shikimate. Gly234 is an NADP(+) binding site.

It belongs to the shikimate dehydrogenase family. Homodimer.

The enzyme catalyses shikimate + NADP(+) = 3-dehydroshikimate + NADPH + H(+). It participates in metabolic intermediate biosynthesis; chorismate biosynthesis; chorismate from D-erythrose 4-phosphate and phosphoenolpyruvate: step 4/7. Involved in the biosynthesis of the chorismate, which leads to the biosynthesis of aromatic amino acids. Catalyzes the reversible NADPH linked reduction of 3-dehydroshikimate (DHSA) to yield shikimate (SA). The chain is Shikimate dehydrogenase (NADP(+)) from Clostridium botulinum (strain ATCC 19397 / Type A).